The following is a 254-amino-acid chain: Metallo-beta-lactamase type 2 (254 aa).

An N-terminal signal peptide occupies residues 1-27 (MMKGWMKCGLAGAVVLMASFWGGSVRA). Aspartate 99 lines the Zn(2+) pocket. Residues threonine 135 and histidine 174 each contribute to the substrate site. A Zn(2+)-binding site is contributed by cysteine 193. Substrate-binding residues include lysine 196 and asparagine 201. Histidine 231 contributes to the Zn(2+) binding site.

It belongs to the metallo-beta-lactamase superfamily. Class-B beta-lactamase family. In terms of assembly, monomer. Zn(2+) is required as a cofactor.

The protein localises to the periplasm. The catalysed reaction is a beta-lactam + H2O = a substituted beta-amino acid. With respect to regulation, competitively inhibited by mercaptophosphonate and pyridine carboxylate derivatives. Also inhibited by the binding of a second zinc ion and by chelating agents such as EDTA. Functionally, confers resistance to the different beta-lactams antibiotics (penicillin, cephalosporin and carbapenem) via the hydrolysis of the beta-lactam ring. It is able to hydrolyze penicillin and imipenem, but is much less active against cephalothin, cefotaxime, meropenem and ceftazidime. The polypeptide is Metallo-beta-lactamase type 2 (Aeromonas hydrophila).